Consider the following 1400-residue polypeptide: DNA-directed RNA polymerase subunit beta' (1400 aa).

4 residues coordinate Zn(2+): C70, C72, C85, and C88. Mg(2+) is bound by residues D460, D462, and D464. The Zn(2+) site is built by C814, C888, C895, and C898. A disordered region spans residues 1367–1400 (DRQAKRAEAQEGPSAEQATDNLAALLNAGFSSDE).

This sequence belongs to the RNA polymerase beta' chain family. The RNAP catalytic core consists of 2 alpha, 1 beta, 1 beta' and 1 omega subunit. When a sigma factor is associated with the core the holoenzyme is formed, which can initiate transcription. The cofactor is Mg(2+). Requires Zn(2+) as cofactor.

The catalysed reaction is RNA(n) + a ribonucleoside 5'-triphosphate = RNA(n+1) + diphosphate. DNA-dependent RNA polymerase catalyzes the transcription of DNA into RNA using the four ribonucleoside triphosphates as substrates. This Vibrio campbellii (strain ATCC BAA-1116) protein is DNA-directed RNA polymerase subunit beta'.